The primary structure comprises 212 residues: External core antigen (212 aa).

The N-terminal stretch at 1-19 (MQLFHLCLIISCSCPTVQA) is a signal peptide. The tract at residues 25–27 (GWL) is HBEAG. The segment at 172–212 (LPETTVVRRRGRSPRRRTPSPRRRRSKSPRRRRSQSRESQC) is disordered. Residues 178-205 (VRRRGRSPRRRTPSPRRRRSKSPRRRRS) are compositionally biased toward basic residues. Residues 184-189 (SPRRRT) form a 1; half-length repeat. The segment at 184-205 (SPRRRTPSPRRRRSKSPRRRRS) is 3 X 7 AA repeats of S-P-R-R-R-R-S. Residues 184 to 212 (SPRRRTPSPRRRRSKSPRRRRSQSRESQC) constitute a propeptide that is removed on maturation. 2 repeat units span residues 191–197 (SPRRRRS) and 199–205 (SPRRRRS).

Belongs to the orthohepadnavirus precore antigen family. Homodimerizes. Post-translationally, phosphorylated. In terms of processing, cleaved by host furin.

The protein resides in the secreted. It is found in the host nucleus. Its function is as follows. May regulate immune response to the intracellular capsid in acting as a T-cell tolerogen, by having an immunoregulatory effect which prevents destruction of infected cells by cytotoxic T-cells. This immune regulation may predispose to chronicity during perinatal infections and prevent severe liver injury during adult infections. The polypeptide is External core antigen (Hepatitis B virus genotype C subtype adr (isolate Japan/Nishioka/1983) (HBV-C)).